We begin with the raw amino-acid sequence, 213 residues long: 5-deoxy-D-ribulose 1-phosphate aldolase (213 aa).

Substrate-binding positions include 28–29, 45–46, and 74–76; these read GN, SG, and SSE. The Proton donor/acceptor role is filled by Glu-76. Mn(2+) is bound by residues Glu-76, His-95, His-97, and His-157.

This sequence belongs to the aldolase class II family. In terms of assembly, forms homooligomers, possibly homotetramers. Mn(2+) is required as a cofactor.

It carries out the reaction 5-deoxy-D-ribulose 1-phosphate = dihydroxyacetone phosphate + acetaldehyde. It functions in the pathway carbohydrate degradation. Functionally, catalyzes the cleavage of 5-deoxy-D-ribulose 1-phosphate to yield dihydroxyacetone phosphate (DHAP) and acetaldehyde, as part of a 5-deoxyribose salvage pathway that recycles this toxic radical SAM enzyme by-product to mainstream metabolites. Is also able to catalyze the reverse reaction, using several aldehydes as substrate, with acetaldehyde being the preferred substrate. The chain is 5-deoxy-D-ribulose 1-phosphate aldolase from Bacillus thuringiensis serovar kurstaki (strain ATCC 35866 / NRRL B-4488 / HD73).